Here is a 135-residue protein sequence, read N- to C-terminus: Small ribosomal subunit protein uS12 (135 aa).

The interval Met1–Gln29 is disordered. 3-methylthioaspartic acid is present on Asp89. The disordered stretch occupies residues Gly106–Lys135. A compositionally biased stretch (basic residues) spans Ser113–Lys123.

The protein belongs to the universal ribosomal protein uS12 family. As to quaternary structure, part of the 30S ribosomal subunit. Contacts proteins S8 and S17. May interact with IF1 in the 30S initiation complex.

In terms of biological role, with S4 and S5 plays an important role in translational accuracy. Functionally, interacts with and stabilizes bases of the 16S rRNA that are involved in tRNA selection in the A site and with the mRNA backbone. Located at the interface of the 30S and 50S subunits, it traverses the body of the 30S subunit contacting proteins on the other side and probably holding the rRNA structure together. The combined cluster of proteins S8, S12 and S17 appears to hold together the shoulder and platform of the 30S subunit. The chain is Small ribosomal subunit protein uS12 from Sulfurihydrogenibium sp. (strain YO3AOP1).